The chain runs to 303 residues: Protein REVEILLE 5 (303 aa).

In terms of domain architecture, HTH myb-type spans 54 to 108 (TIKKSRENWTDQEHDKFLEALHLFDRDWKKIEAFVGSKTVVQIRSHAQKYFLKVQ). The segment at residues 81-104 (WKKIEAFVGSKTVVQIRSHAQKYF) is a DNA-binding region (H-T-H motif). Residues 109–130 (KSGANEHLPPPRPKRKASHPYP) form a disordered region.

It is found in the nucleus. Functionally, probable transcription factor. This chain is Protein REVEILLE 5 (RVE5), found in Arabidopsis thaliana (Mouse-ear cress).